The following is a 511-amino-acid chain: MMKMRWLSAAVMLTLYTSSSWAFSIDDVAKQAQSLAGKGYEAPKSNLPSVFRDMKYADYQQIQFNHDKAYWNNLKTPFKLEFYHQGMYFDTPVKINEVTATAVKRIKYSPDYFTFGDVQHDKDTVKDLGFAGFKVLYPINSKDKNDEIVSMLGASYFRVIGAGQVYGLSARGLAIDTALPSGEEFPRFKEFWIERPKPTDKRLTIYALLDSPRATGAYKFVVMPGRDTVVDVQSKIYLRDKVGKLGGAPLTSMFLFGPNQPSPANNYRPELHDSNGLSIHAGNGEWIWRPLNNPKHLAVSSFSMENPQGFGLLQRGRDFSRFEDLDDRYDLRPSAWVTPKGEWGKGSVELVEIPTNDETNDNIVAYWTPDQLPEPGKEMNFKYTITFSRDEDKLHAPDNAWVQQTRRSTGDVKQSNLIRQPDGTIAFVVDFTGAEMKKLPEDTPVTAQTSIGDNGEIVESTVRYNPVTKGWRLVMRVKVKDAKKTTEMRAALVNADQTLSETWSYQLPANE.

An N-terminal signal peptide occupies residues 1–22; sequence MMKMRWLSAAVMLTLYTSSSWA.

It belongs to the OpgD/OpgG family.

It localises to the periplasm. The protein operates within glycan metabolism; osmoregulated periplasmic glucan (OPG) biosynthesis. Its function is as follows. Involved in the biosynthesis of osmoregulated periplasmic glucans (OPGs). This is Glucans biosynthesis protein G from Shigella boydii serotype 4 (strain Sb227).